Consider the following 185-residue polypeptide: Cbp/p300-interacting transactivator 4 (185 aa).

Disordered regions lie at residues 15 to 64 and 95 to 130; these read PRPP…VAYG and YPGR…AHAL. A compositionally biased stretch (pro residues) spans 103-125; the sequence is PGAPGGPSGPQPAPGAPAPPLQP.

The protein belongs to the CITED family. Interacts via its C-terminal region with the CH1 domain of CREBBP and EP300. Interacts with all TFAP2/AP-2 isoforms.

The protein localises to the nucleus. Its subcellular location is the cytoplasm. Its function is as follows. Acts as a transcriptional coactivator for TFAP2/AP-2. Enhances estrogen-dependent transactivation mediated by estrogen receptors. May function as an inhibitor of transactivation by HIF1A by disrupting HIF1A interaction with CREBBP. May be involved in regulation of gene expression during development and differentiation of blood cells, endothelial cells and mammary epithelial cells. This chain is Cbp/p300-interacting transactivator 4 (CITED4), found in Bos taurus (Bovine).